The primary structure comprises 479 residues: Ammonium transporter Rh type C (479 aa).

Topologically, residues 1–9 (MAWNTNLRW) are cytoplasmic. A helical transmembrane segment spans residues 10–30 (RLPLTCLLLQVVMVILFGVFV). Over 31–60 (RYDFEADAHWWSERTHKNLSDVENEFYYRY) the chain is Extracellular. Asn48 carries an N-linked (GlcNAc...) asparagine glycan. A helical transmembrane segment spans residues 61 to 81 (PSFQDVHVMVFVGFGFLMTFL). At 82-85 (QRYG) the chain is on the cytoplasmic side. A helical membrane pass occupies residues 86–106 (FSAVGFNFLLAAFGIQWALLM). Topologically, residues 107-123 (QGWFHFLQGRYIVVGVE) are extracellular. Residues 124–144 (NLINADFCVASVCVAFGAVLG) form a helical membrane-spanning segment. The Cytoplasmic portion of the chain corresponds to 145-148 (KVSP). Residues 149 to 169 (IQLLIMTFFQVTLFAVNEFIL) traverse the membrane as a helical segment. Residues 170–177 (LNLLKVKD) lie on the Extracellular side of the membrane. The chain crosses the membrane as a helical span at residues 178-200 (AGGSMTIHTFGAYFGLTVTRILY). The Cytoplasmic portion of the chain corresponds to 201-218 (RRNLEQSKERQNSVYQSD). Residues 219 to 239 (LFAMIGTLFLWMYWPSFNSAI) form a helical membrane-spanning segment. Residues 240–250 (SYHGDSQHRAA) lie on the Extracellular side of the membrane. A helical transmembrane segment spans residues 251-271 (INTYCSLAACVLTSVAISSAL). Topologically, residues 272–281 (HKKGKLDMVH) are cytoplasmic. A helical membrane pass occupies residues 282 to 302 (IQNATLAGGVAVGTAAEMMLM). Position 303 (Pro303) is a topological domain, extracellular. A helical membrane pass occupies residues 304–324 (YGALIIGFVCGIISTLGFVYL). Over 325–345 (TPFLESRLHIQDTCGINNLHG) the chain is Cytoplasmic. Residues 346–366 (IPGIIGGIVGAVTAASASLEV) traverse the membrane as a helical segment. Residues 367-394 (YGKEGLVHSFDFQGFKGDWTARTQGKFQ) lie on the Extracellular side of the membrane. The helical transmembrane segment at 395-415 (IYGLLVTLAMALMGGIIVGLI) threads the bilayer. Topologically, residues 416 to 479 (LRLPFWGQPS…PMASSVPLVP (64 aa)) are cytoplasmic.

This sequence belongs to the ammonium transporter (TC 2.A.49) family. Rh subfamily. As to quaternary structure, homotrimer. In terms of processing, N-glycosylated.

It localises to the cell membrane. Its subcellular location is the apical cell membrane. It carries out the reaction NH4(+)(in) = NH4(+)(out). It catalyses the reaction methylamine(out) = methylamine(in). The enzyme catalyses CO2(out) = CO2(in). Its function is as follows. Ammonium transporter involved in the maintenance of acid-base homeostasis. Transports ammonium and its related derivative methylammonium across the plasma membrane of epithelial cells likely contributing to renal transepithelial ammonia transport and ammonia metabolism. Postulated to primarily mediate an electroneutral bidirectional transport of NH3 ammonia species according to a mechanism that implies interaction of an NH4(+) ion with acidic residues of the pore entry followed by dissociation of NH4(+) into NH3 and H(+). As a result NH3 transits through the central pore and is protonated on the extracellular side reforming NH4(+). May act as a CO2 channel providing for renal acid secretion. The sequence is that of Ammonium transporter Rh type C (RHCG) from Pan troglodytes (Chimpanzee).